Here is a 1705-residue protein sequence, read N- to C-terminus: Intersectin-1 (1705 aa).

2 EH domains span residues 21–109 (ERAK…PVAM) and 220–309 (SRLK…SFRR). EF-hand domains follow at residues 53-88 (LPQP…IKLK) and 253-288 (LPQS…IDVA). The Ca(2+) site is built by Asp-66, Asn-68, Asp-70, Arg-72, Glu-77, Asp-266, Asp-268, Asp-270, Lys-272, and Glu-277. Disordered stretches follow at residues 322-355 (VSVD…KREN), 386-433 (RAEQ…ERRE), and 668-708 (RYKF…PPEP). The tract at residues 325–697 (DQRLPEEPEE…VEKKPEIQEK (373 aa)) is KLERQ. Residues 339-355 (NADKKLPVTFEDKKREN) are compositionally biased toward basic and acidic residues. Residues 350-687 (DKKRENFERG…KREESIQKCE (338 aa)) adopt a coiled-coil conformation. Residues 668–699 (RYKFQDEEKEKREESIQKCEVEKKPEIQEKPN) show a composition bias toward basic and acidic residues. In terms of domain architecture, SH3 1 spans 732–793 (VKVVYYRALY…PANYAERMPE (62 aa)). The span at 823–833 (AFTNTSTNSNN) shows a compositional bias: low complexity. Positions 823-851 (AFTNTSTNSNNWADFSSTWPTNNTDKVES) are disordered. Polar residues predominate over residues 834 to 846 (WADFSSTWPTNNT). The SH3 2 domain occupies 897–955 (VEGLQAQALYPWRAKKDNHLNFNKNDVITVLEQQDMWWFGEVQGQKGWFPKSYVKLISG). Residues 959 to 978 (KSTSIDSTSSESPASLKRVS) form a disordered region. The segment covering 960–973 (STSIDSTSSESPAS) has biased composition (low complexity). 3 SH3 domains span residues 986–1044 (IQGE…PKDS), 1058–1122 (KKPE…LLSP), and 1139–1198 (PPTC…LTTD). Positions 1088–1111 (RKKNPGGWWEGELQARGKKRQIGW) match the Bipartite nuclear localization signal; in isoform 2 motif. In terms of domain architecture, DH spans 1221-1407 (KRQGYIHELI…EELCSQVNEG (187 aa)). In terms of domain architecture, PH spans 1446-1555 (KFLHSGKLYK…WVQKIKAASE (110 aa)). The C2 domain maps to 1563 to 1679 (KKREKAYLVR…KKDQGSKGPV (117 aa)). Ca(2+) is bound by residues Asp-1651, Ser-1654, and Asp-1657.

In terms of assembly, binds epn1 and epn2. Requires Ca(2+) as cofactor.

The protein resides in the endomembrane system. It is found in the synapse. Its subcellular location is the synaptosome. The protein localises to the cell projection. It localises to the lamellipodium. The protein resides in the cell membrane. It is found in the membrane. Its subcellular location is the clathrin-coated pit. The protein localises to the recycling endosome. It localises to the cytoplasm. The protein resides in the nucleus envelope. Functionally, adapter protein that provides a link between the endocytic membrane traffic and the actin assembly machinery. Acts as a guanine nucleotide exchange factor (GEF) for cdc42, and thereby stimulates actin nucleation mediated by wasl and the arp2/3 complex. Involved in endocytosis of activated egfr, and probably also other growth factor receptors. This Xenopus laevis (African clawed frog) protein is Intersectin-1 (itsn1).